The primary structure comprises 88 residues: Small ribosomal subunit protein bS20 (88 aa).

The segment at 1 to 33 (MANTSSAKKATRKIARRTAVNKSRRTQMRGSVR) is disordered.

This sequence belongs to the bacterial ribosomal protein bS20 family.

Its function is as follows. Binds directly to 16S ribosomal RNA. The chain is Small ribosomal subunit protein bS20 from Rhodopseudomonas palustris (strain BisB5).